Reading from the N-terminus, the 258-residue chain is Glucanase inhibitor protein 3 (258 aa).

The first 19 residues, 1–19 (MKIISAVAASSIALGAVSA), serve as a signal peptide directing secretion. One can recognise a Peptidase S1 domain in the interval 29–256 (VLGGAVVPSG…ALEWINSITK (228 aa)). Cysteine 56 and cysteine 72 are oxidised to a cystine. N-linked (GlcNAc...) asparagine glycosylation is found at asparagine 90, asparagine 105, and asparagine 110. Disulfide bonds link cysteine 180–cysteine 192 and cysteine 202–cysteine 233.

It belongs to the peptidase S1 family. As to quaternary structure, forms an apoplastic complex with host endoglucanases in tomato leaves during P.infestans infection.

The protein resides in the secreted. Secreted effector that suppresses host plant glucan elicitor-mediated defense responses. Targets host endoglucanases and inhibits the endoglucanase-mediated release of elicitor-active glucan oligosaccharides from P.infestans cell walls. This is Glucanase inhibitor protein 3 from Phytophthora infestans (Potato late blight agent).